Consider the following 172-residue polypeptide: MHYARIVSNLRLGYDIIHMAEYVTLTTNRKAFHNYFLEEKYEAGIMLLGTEIKSLRSGRVNMGDAYVKPQRGELWLVNAHISAYECSGHTSHEPMRERKLLMHRKEIVLLMSKVKEKGLTLIPVRIYLKNDIAKVELSLGRGKKLYDKRDTVTKRDTERELEREVKYRNFRR.

The protein belongs to the SmpB family.

The protein resides in the cytoplasm. In terms of biological role, required for rescue of stalled ribosomes mediated by trans-translation. Binds to transfer-messenger RNA (tmRNA), required for stable association of tmRNA with ribosomes. tmRNA and SmpB together mimic tRNA shape, replacing the anticodon stem-loop with SmpB. tmRNA is encoded by the ssrA gene; the 2 termini fold to resemble tRNA(Ala) and it encodes a 'tag peptide', a short internal open reading frame. During trans-translation Ala-aminoacylated tmRNA acts like a tRNA, entering the A-site of stalled ribosomes, displacing the stalled mRNA. The ribosome then switches to translate the ORF on the tmRNA; the nascent peptide is terminated with the 'tag peptide' encoded by the tmRNA and targeted for degradation. The ribosome is freed to recommence translation, which seems to be the essential function of trans-translation. This Dehalococcoides mccartyi (strain ATCC BAA-2100 / JCM 16839 / KCTC 5957 / BAV1) protein is SsrA-binding protein.